A 253-amino-acid polypeptide reads, in one-letter code: Ubiquinone/menaquinone biosynthesis C-methyltransferase UbiE (253 aa).

S-adenosyl-L-methionine contacts are provided by residues T76, D97, 125–126, and S142; that span reads NA.

Belongs to the class I-like SAM-binding methyltransferase superfamily. MenG/UbiE family.

It catalyses the reaction a 2-demethylmenaquinol + S-adenosyl-L-methionine = a menaquinol + S-adenosyl-L-homocysteine + H(+). The catalysed reaction is a 2-methoxy-6-(all-trans-polyprenyl)benzene-1,4-diol + S-adenosyl-L-methionine = a 5-methoxy-2-methyl-3-(all-trans-polyprenyl)benzene-1,4-diol + S-adenosyl-L-homocysteine + H(+). Its pathway is quinol/quinone metabolism; menaquinone biosynthesis; menaquinol from 1,4-dihydroxy-2-naphthoate: step 2/2. It functions in the pathway cofactor biosynthesis; ubiquinone biosynthesis. In terms of biological role, methyltransferase required for the conversion of demethylmenaquinol (DMKH2) to menaquinol (MKH2) and the conversion of 2-polyprenyl-6-methoxy-1,4-benzoquinol (DDMQH2) to 2-polyprenyl-3-methyl-6-methoxy-1,4-benzoquinol (DMQH2). This is Ubiquinone/menaquinone biosynthesis C-methyltransferase UbiE from Xylella fastidiosa (strain 9a5c).